Consider the following 159-residue polypeptide: Ribonuclease H (159 aa).

One can recognise an RNase H type-1 domain in the interval 1–145 (MTHIRAIYTD…CDLIARRLSR (145 aa)). Mg(2+) contacts are provided by Asp-10, Glu-49, Asp-74, and Asp-137.

The protein belongs to the RNase H family. Monomer. Mg(2+) is required as a cofactor.

It localises to the cytoplasm. It catalyses the reaction Endonucleolytic cleavage to 5'-phosphomonoester.. Functionally, endonuclease that specifically degrades the RNA of RNA-DNA hybrids. This Thermosynechococcus vestitus (strain NIES-2133 / IAM M-273 / BP-1) protein is Ribonuclease H.